A 138-amino-acid polypeptide reads, in one-letter code: Invertebrate-type lysozyme 6 (138 aa).

The N-terminal stretch at 1–18 (MFVKLCGILAFAVTYASS) is a signal peptide. Residues 19-138 (DCLQCICKKE…WNGIKGLGCS (120 aa)) enclose the I-type lysozyme domain. Cystine bridges form between Cys-20-Cys-106, Cys-25-Cys-31, Cys-36-Cys-45, Cys-58-Cys-86, Cys-76-Cys-82, and Cys-98-Cys-120. Residue Glu-28 is the Proton donor of the active site. Asp-39 (nucleophile) is an active-site residue. 51–57 (KLSYYKD) is a binding site for substrate. Substrate is bound by residues Tyr-90 and 113-115 (HNG).

The protein belongs to the glycosyl hydrolase 22 family. Type-I lysozyme subfamily. As to expression, expressed in pharyngeal gland cells and duct projections, coelomocytes and intestine.

It catalyses the reaction Hydrolysis of (1-&gt;4)-beta-linkages between N-acetylmuramic acid and N-acetyl-D-glucosamine residues in a peptidoglycan and between N-acetyl-D-glucosamine residues in chitodextrins.. Its function is as follows. Has bacteriolytic activity against Gram-positive bacteria. The chain is Invertebrate-type lysozyme 6 from Caenorhabditis elegans.